Here is a 622-residue protein sequence, read N- to C-terminus: Polypeptide N-acetylgalactosaminyltransferase 6 (622 aa).

Residues 1–8 lie on the Cytoplasmic side of the membrane; it reads MRLLRRRH. Residues 9 to 28 form a helical; Signal-anchor for type II membrane protein membrane-spanning segment; the sequence is MSLRLAMLGSVFMLFLFIRQ. Residues 29–622 lie on the Lumenal side of the membrane; it reads KDVSNQEQAM…RDPYQLWLFV (594 aa). N-linked (GlcNAc...) asparagine glycosylation occurs at N86. Residues 176-285 are catalytic subdomain A; that stretch reads LPTTSVIIVF…HGWLEPLLAR (110 aa). Residues D269, H271, and H407 each coordinate Mn(2+). Residues 348-410 are catalytic subdomain B; that stretch reads PIKSPTFAGG…PCSVVGHVFR (63 aa). A glycan (N-linked (GlcNAc...) asparagine) is linked at N476. A Ricin B-type lectin domain is found at 506–622; that stretch reads TNQCLDVGEN…RDPYQLWLFV (117 aa). C509 and C527 are oxidised to a cystine. UDP-N-acetyl-alpha-D-galactosamine is bound by residues D511, E514, H528, and N533. 2 disulfide bridges follow: C553–C566 and C597–C610.

It belongs to the glycosyltransferase 2 family. GalNAc-T subfamily. The cofactor is Mn(2+).

Its subcellular location is the golgi apparatus membrane. It carries out the reaction L-seryl-[protein] + UDP-N-acetyl-alpha-D-galactosamine = a 3-O-[N-acetyl-alpha-D-galactosaminyl]-L-seryl-[protein] + UDP + H(+). It catalyses the reaction L-threonyl-[protein] + UDP-N-acetyl-alpha-D-galactosamine = a 3-O-[N-acetyl-alpha-D-galactosaminyl]-L-threonyl-[protein] + UDP + H(+). The protein operates within protein modification; protein glycosylation. Its function is as follows. Catalyzes the initial reaction in O-linked oligosaccharide biosynthesis, the transfer of an N-acetyl-D-galactosamine residue to a serine or threonine residue on the protein receptor. May participate in synthesis of oncofetal fibronectin. Has activity toward Muc1a, Muc2, EA2 and fibronectin peptides. The sequence is that of Polypeptide N-acetylgalactosaminyltransferase 6 (Galnt6) from Mus musculus (Mouse).